We begin with the raw amino-acid sequence, 470 residues long: Protein C-ets-2 (470 aa).

A PNT domain is found at 85–170 (ATFSGFKKEQ…EHLEQMIKEN (86 aa)). Ser-225 carries the post-translational modification Phosphoserine. Positions 270 to 291 (ASGKPRDHDSAETGGDSFESSE) are disordered. Residues Ser-296, Ser-299, and Ser-302 each carry the phosphoserine modification. Residues 364–444 (IQLWQFLLEL…SGKRYVYRFV (81 aa)) constitute a DNA-binding region (ETS).

It belongs to the ETS family. Post-translationally, phosphorylation by CDK10 at Ser-225 may create a phosphodegron that targets ETS2 for proteasomal degradation.

It localises to the nucleus. Its function is as follows. Transcription factor activating transcription. Binds specifically the GGA DNA motif in gene promoters and stimulates transcription of those genes. The chain is Protein C-ets-2 (ETS2) from Bos taurus (Bovine).